The primary structure comprises 247 residues: Mitochondrial inner membrane protease ATP23 (247 aa).

Residues 1–21 (MSVPPPPKEDLIKPNPPKSES) form a disordered region. His144 is a binding site for a divalent metal cation. The active site involves Glu145. His148 provides a ligand contact to a divalent metal cation.

Belongs to the peptidase M76 family.

The protein resides in the mitochondrion inner membrane. Has a dual role in the assembly of mitochondrial ATPase. Acts as a protease that removes N-terminal residues of mitochondrial ATPase CF(0) subunit 6 at the intermembrane space side. Also involved in the correct assembly of the membrane-embedded ATPase CF(0) particle, probably mediating association of subunit 6 with the subunit 9 ring. In Kluyveromyces lactis (strain ATCC 8585 / CBS 2359 / DSM 70799 / NBRC 1267 / NRRL Y-1140 / WM37) (Yeast), this protein is Mitochondrial inner membrane protease ATP23 (ATP23).